The chain runs to 91 residues: Large ribosomal subunit protein bL27 (91 aa).

The disordered stretch occupies residues 1-21; the sequence is MAHKKSGGSSRNGRDSAGRRL.

Belongs to the bacterial ribosomal protein bL27 family.

This is Large ribosomal subunit protein bL27 from Phenylobacterium zucineum (strain HLK1).